The primary structure comprises 493 residues: Mitochondrial distribution and morphology protein 10 (493 aa).

This sequence belongs to the MDM10 family. Component of the ER-mitochondria encounter structure (ERMES) or MDM complex, composed of MMM1, MDM10, MDM12 and MDM34. Associates with the mitochondrial outer membrane sorting assembly machinery SAM(core) complex, which consists of SAM35, SAM37 and SAM50, to form a SAM(holo) complex.

Its subcellular location is the mitochondrion outer membrane. In terms of biological role, component of the ERMES/MDM complex, which serves as a molecular tether to connect the endoplasmic reticulum and mitochondria. Components of this complex are involved in the control of mitochondrial shape and protein biogenesis and may function in phospholipid exchange. MDM10 is involved in the late assembly steps of the general translocase of the mitochondrial outer membrane (TOM complex). Functions in the TOM40-specific route of the assembly of outer membrane beta-barrel proteins, including the association of TOM40 with the receptor TOM22 and small TOM proteins. Can associate with the SAM(core) complex as well as the MDM12-MMM1 complex, both involved in late steps of the major beta-barrel assembly pathway, that is responsible for biogenesis of all outer membrane beta-barrel proteins. May act as a switch that shuttles between both complexes and channels precursor proteins into the TOM40-specific pathway. Plays a role in mitochondrial morphology and in the inheritance of mitochondria. This is Mitochondrial distribution and morphology protein 10 from Saccharomyces cerevisiae (strain RM11-1a) (Baker's yeast).